A 315-amino-acid polypeptide reads, in one-letter code: MRASPIRIPTVTSDTDWDFCFHLSQQTKIPEHQRTDESSPTSGSEESEEDTKAKEKVIDHMSHPREKLAQSQKKIAQLIKGKKNIEANKELIRCVTLSRIIFGEEHWKCAQALATLAYGYLTLRGLPAQAKKHAESAKNVLLTWKGTTTSDKEEKQILETLVMLYYTLGVVCLLQNHGREAYFNLQKSERNMKELRESYKGGTCGLQVSEKDLTVALGRASLANCRLNLALVYFEKAVDNVIANKGDSTSELVSLYQEIAQIEQLRRNHEQAIQYLHQAHSICVSLYTEVSPQAAEASALLAKAYAMSGEVQHKA.

The tract at residues 28–56 (KIPEHQRTDESSPTSGSEESEEDTKAKEK) is disordered. Coiled-coil stretches lie at residues 65 to 90 (REKL…ANKE), 179 to 200 (REAY…ESYK), and 250 to 280 (SELV…HQAH).

The protein localises to the cytoplasm. The protein resides in the cytoskeleton. It localises to the microtubule organizing center. Its subcellular location is the centrosome. It is found in the spindle. The protein localises to the midbody. The polypeptide is Tetratricopeptide repeat protein 23-like (TTC23L) (Bos taurus (Bovine)).